Reading from the N-terminus, the 295-residue chain is Glutamyl-Q tRNA(Asp) synthetase (295 aa).

Residues 5-9 (RFAPS) and Glu-41 contribute to the L-glutamate site. A 'HIGH' region motif is present at residues 8-18 (PSPTGLLHIGS). 4 residues coordinate Zn(2+): Cys-97, Cys-99, Tyr-117, and Cys-121. L-glutamate is bound by residues Tyr-178 and Arg-196. The 'KMSKS' region motif lies at 234–238 (KWSKQ). An ATP-binding site is contributed by Lys-237.

This sequence belongs to the class-I aminoacyl-tRNA synthetase family. GluQ subfamily. Requires Zn(2+) as cofactor.

In terms of biological role, catalyzes the tRNA-independent activation of glutamate in presence of ATP and the subsequent transfer of glutamate onto a tRNA(Asp). Glutamate is transferred on the 2-amino-5-(4,5-dihydroxy-2-cyclopenten-1-yl) moiety of the queuosine in the wobble position of the QUC anticodon. This is Glutamyl-Q tRNA(Asp) synthetase from Neisseria meningitidis serogroup B (strain ATCC BAA-335 / MC58).